We begin with the raw amino-acid sequence, 390 residues long: Lipid-A-disaccharide synthase (390 aa).

This sequence belongs to the LpxB family.

It catalyses the reaction a lipid X + a UDP-2-N,3-O-bis[(3R)-3-hydroxyacyl]-alpha-D-glucosamine = a lipid A disaccharide + UDP + H(+). Its pathway is bacterial outer membrane biogenesis; LPS lipid A biosynthesis. Functionally, condensation of UDP-2,3-diacylglucosamine and 2,3-diacylglucosamine-1-phosphate to form lipid A disaccharide, a precursor of lipid A, a phosphorylated glycolipid that anchors the lipopolysaccharide to the outer membrane of the cell. The sequence is that of Lipid-A-disaccharide synthase from Haemophilus influenzae (strain 86-028NP).